A 67-amino-acid chain; its full sequence is Putative sodium channel alpha-toxin Acra7 (67 aa).

The LCN-type CS-alpha/beta domain maps to 2–66; that stretch reads RDGYIVKPTN…PIKDPNQDCT (65 aa). 4 cysteine pairs are disulfide-bonded: Cys-12–Cys-65, Cys-16–Cys-37, Cys-23–Cys-47, and Cys-27–Cys-49. A propeptide (removed by a carboxypeptidase) is located at residue Arg-67.

This sequence belongs to the long (4 C-C) scorpion toxin superfamily. Sodium channel inhibitor family. Alpha subfamily. As to expression, expressed by the venom gland.

It localises to the secreted. Its function is as follows. Alpha toxins bind voltage-independently at site-3 of sodium channels (Nav) and inhibit the inactivation of the activated channels, thereby blocking neuronal transmission. The chain is Putative sodium channel alpha-toxin Acra7 from Androctonus crassicauda (Arabian fat-tailed scorpion).